The sequence spans 546 residues: Chaperonin GroEL (546 aa).

Residues 30–33 (TMGP), Lys51, 87–91 (DGTTT), Gly415, 478–480 (NAA), and Asp494 contribute to the ATP site.

The protein belongs to the chaperonin (HSP60) family. In terms of assembly, forms a cylinder of 14 subunits composed of two heptameric rings stacked back-to-back. Interacts with the co-chaperonin GroES.

It localises to the cytoplasm. The enzyme catalyses ATP + H2O + a folded polypeptide = ADP + phosphate + an unfolded polypeptide.. Functionally, together with its co-chaperonin GroES, plays an essential role in assisting protein folding. The GroEL-GroES system forms a nano-cage that allows encapsulation of the non-native substrate proteins and provides a physical environment optimized to promote and accelerate protein folding. This chain is Chaperonin GroEL, found in Wolinella succinogenes (strain ATCC 29543 / DSM 1740 / CCUG 13145 / JCM 31913 / LMG 7466 / NCTC 11488 / FDC 602W) (Vibrio succinogenes).